A 350-amino-acid chain; its full sequence is Methionine import ATP-binding protein MetN (350 aa).

An ABC transporter domain is found at 2–241 (IQIKNLKKEY…PQAPVTRSFV (240 aa)). Position 38 to 45 (38 to 45 (GHSGAGKS)) interacts with ATP.

This sequence belongs to the ABC transporter superfamily. Methionine importer (TC 3.A.1.24) family. The complex is composed of two ATP-binding proteins (MetN), two transmembrane proteins (MetI) and a solute-binding protein (MetQ).

The protein localises to the cell inner membrane. The catalysed reaction is L-methionine(out) + ATP + H2O = L-methionine(in) + ADP + phosphate + H(+). It carries out the reaction D-methionine(out) + ATP + H2O = D-methionine(in) + ADP + phosphate + H(+). Its function is as follows. Part of the ABC transporter complex MetNIQ involved in methionine import. Responsible for energy coupling to the transport system. The polypeptide is Methionine import ATP-binding protein MetN (Francisella tularensis subsp. tularensis (strain SCHU S4 / Schu 4)).